The chain runs to 178 residues: uncharacterized protein (178 aa).

2 consecutive transmembrane segments (helical) span residues 6–26 (AIFG…VSGL) and 154–174 (KELV…AMLI).

The protein resides in the cell membrane. This is an uncharacterized protein from Methanocaldococcus jannaschii (strain ATCC 43067 / DSM 2661 / JAL-1 / JCM 10045 / NBRC 100440) (Methanococcus jannaschii).